A 77-amino-acid chain; its full sequence is NAD(P)H-quinone oxidoreductase subunit L (77 aa).

The next 2 helical transmembrane spans lie at 10–30 and 48–68; these read LLIATLYLSLSVTYLLVLPAG and LVMYFFVFFLFPGMLLLSPFL.

It belongs to the complex I NdhL subunit family. As to quaternary structure, NDH-1 can be composed of about 15 different subunits; different subcomplexes with different compositions have been identified which probably have different functions.

It is found in the cellular thylakoid membrane. The enzyme catalyses a plastoquinone + NADH + (n+1) H(+)(in) = a plastoquinol + NAD(+) + n H(+)(out). The catalysed reaction is a plastoquinone + NADPH + (n+1) H(+)(in) = a plastoquinol + NADP(+) + n H(+)(out). Functionally, NDH-1 shuttles electrons from an unknown electron donor, via FMN and iron-sulfur (Fe-S) centers, to quinones in the respiratory and/or the photosynthetic chain. The immediate electron acceptor for the enzyme in this species is believed to be plastoquinone. Couples the redox reaction to proton translocation, and thus conserves the redox energy in a proton gradient. Cyanobacterial NDH-1 also plays a role in inorganic carbon-concentration. In Picosynechococcus sp. (strain ATCC 27264 / PCC 7002 / PR-6) (Agmenellum quadruplicatum), this protein is NAD(P)H-quinone oxidoreductase subunit L.